The chain runs to 66 residues: U10-theraphotoxin-Cg1a 3 (66 aa).

Residues 1–21 form the signal peptide; it reads MKTSVLFVIFGLALLFCLSFA. Positions 22–29 are excised as a propeptide; the sequence is DELEDTGR. Disulfide bonds link C31–C46, C38–C51, and C45–C58.

This sequence belongs to the neurotoxin 10 (Hwtx-1) family. 29 (Jztx-13) subfamily. In terms of tissue distribution, expressed by the venom gland.

It localises to the secreted. Probable ion channel inhibitor. This is U10-theraphotoxin-Cg1a 3 from Chilobrachys guangxiensis (Chinese earth tiger tarantula).